The primary structure comprises 122 residues: Large ribosomal subunit protein uL14 (122 aa).

It belongs to the universal ribosomal protein uL14 family. Part of the 50S ribosomal subunit. Forms a cluster with proteins L3 and L19. In the 70S ribosome, L14 and L19 interact and together make contacts with the 16S rRNA in bridges B5 and B8.

In terms of biological role, binds to 23S rRNA. Forms part of two intersubunit bridges in the 70S ribosome. This chain is Large ribosomal subunit protein uL14, found in Campylobacter jejuni subsp. jejuni serotype O:6 (strain 81116 / NCTC 11828).